The primary structure comprises 351 residues: N-acetyl-gamma-glutamyl-phosphate reductase (351 aa).

Residue cysteine 150 is part of the active site.

This sequence belongs to the NAGSA dehydrogenase family. Type 1 subfamily.

The protein localises to the cytoplasm. It catalyses the reaction N-acetyl-L-glutamate 5-semialdehyde + phosphate + NADP(+) = N-acetyl-L-glutamyl 5-phosphate + NADPH + H(+). It functions in the pathway amino-acid biosynthesis; L-arginine biosynthesis; N(2)-acetyl-L-ornithine from L-glutamate: step 3/4. Its function is as follows. Catalyzes the NADPH-dependent reduction of N-acetyl-5-glutamyl phosphate to yield N-acetyl-L-glutamate 5-semialdehyde. This is N-acetyl-gamma-glutamyl-phosphate reductase from Heliobacterium modesticaldum (strain ATCC 51547 / Ice1).